The chain runs to 711 residues: Ecdysone-inducible protein E75 (711 aa).

A DNA-binding region (nuclear receptor) is located at residues 44–120; it reads TVLCRVCGDK…VGMSRDAVRF (77 aa). NR C4-type zinc fingers lie at residues 47–67 and 84–108; these read CRVC…CEGC and CTKN…LKKC. Positions 153-400 constitute an NR LBD domain; the sequence is DGPRLLARVV…QQMWVEDEGA (248 aa). Disordered regions lie at residues 405-432, 466-530, 559-602, and 680-711; these read SGAD…DCGT, LTVT…DMPV, AMRR…PIRA, and DAPQ…MLPA. Composition is skewed to basic and acidic residues over residues 511–521 and 560–572; these read SLEEHSDDRRP and MRRD…EARP. Positions 574 to 590 are enriched in pro residues; the sequence is RPTPSPQPPHHPHPASP. 2 stretches are compositionally biased toward low complexity: residues 591–602 and 682–692; these read AHPAHSPRPIRA and PQPLNLSKKSP. Over residues 693 to 711 the composition is skewed to pro residues; sequence SPSPPPPPPRSYMPPMLPA.

Belongs to the nuclear hormone receptor family. NR1 subfamily.

It localises to the nucleus. Its function is as follows. Orphan receptor possibly involved in the regulation of genes in the ecdysteroid cascade. This chain is Ecdysone-inducible protein E75 (E75), found in Galleria mellonella (Greater wax moth).